The chain runs to 137 residues: Basic phospholipase A2 homolog APL-K49 (137 aa).

A signal peptide spans 1 to 16; sequence MRTLWIVALLLVGVEG. Intrachain disulfides connect cysteine 42–cysteine 131, cysteine 44–cysteine 60, cysteine 59–cysteine 111, cysteine 65–cysteine 137, cysteine 66–cysteine 104, cysteine 73–cysteine 97, and cysteine 91–cysteine 102. An important for membrane-damaging activities in eukaryotes and bacteria; heparin-binding region spans residues 121 to 133; that stretch reads KKYKAYFKLKCKK.

This sequence belongs to the phospholipase A2 family. Group II subfamily. K49 sub-subfamily. Monomer. Expressed by the venom gland.

It localises to the secreted. Snake venom phospholipase A2 (PLA2) that lacks enzymatic activity. Does not show antibacterial activity. Is myotoxic and displays edema-inducing activities. A model of myotoxic mechanism has been proposed: an apo Lys49-PLA2 is activated by the entrance of a hydrophobic molecule (e.g. fatty acid) at the hydrophobic channel of the protein leading to a reorientation of a monomer. This reorientation causes a transition between 'inactive' to 'active' states, causing alignment of C-terminal and membrane-docking sites (MDoS) side-by-side and putting the membrane-disruption sites (MDiS) in the same plane, exposed to solvent and in a symmetric position for both monomers. The MDoS region stabilizes the toxin on membrane by the interaction of charged residues with phospholipid head groups. Subsequently, the MDiS region destabilizes the membrane with penetration of hydrophobic residues. This insertion causes a disorganization of the membrane, allowing an uncontrolled influx of ions (i.e. calcium and sodium), and eventually triggering irreversible intracellular alterations and cell death. This is Basic phospholipase A2 homolog APL-K49 from Agkistrodon piscivorus leucostoma (Western cottonmouth).